Consider the following 324-residue polypeptide: Delta-aminolevulinic acid dehydratase (324 aa).

Cys-120, Cys-122, and Cys-130 together coordinate Zn(2+). Lys-195 acts as the Schiff-base intermediate with substrate in catalysis. 5-aminolevulinate contacts are provided by Arg-205 and Arg-217. Glu-233 is a binding site for Mg(2+). Lys-248 serves as the catalytic Schiff-base intermediate with substrate. The 5-aminolevulinate site is built by Ser-274 and Tyr-313.

This sequence belongs to the ALAD family. As to quaternary structure, homooctamer. The cofactor is Zn(2+).

It catalyses the reaction 2 5-aminolevulinate = porphobilinogen + 2 H2O + H(+). It functions in the pathway porphyrin-containing compound metabolism; protoporphyrin-IX biosynthesis; coproporphyrinogen-III from 5-aminolevulinate: step 1/4. In terms of biological role, catalyzes an early step in the biosynthesis of tetrapyrroles. Binds two molecules of 5-aminolevulinate per subunit, each at a distinct site, and catalyzes their condensation to form porphobilinogen. The sequence is that of Delta-aminolevulinic acid dehydratase (hemB) from Bacillus subtilis (strain 168).